Consider the following 480-residue polypeptide: UDP-glucose 6-dehydrogenase 3 (480 aa).

NAD(+)-binding positions include 8–13 (GAGYVG), D33, R38, 86–90 (VNTPT), 127–128 (ST), and E161. Residues 157 to 161 (EFLAE), 216 to 223 (KLAANAFL), and 256 to 269 (RIGP…VGFG) contribute to the substrate site. The Nucleophile role is filled by C272. Residue 272-275 (CFQK) coordinates NAD(+). 334 to 335 (FK) contributes to the substrate binding site. R342 provides a ligand contact to NAD(+). R447 is a binding site for substrate.

Belongs to the UDP-glucose/GDP-mannose dehydrogenase family.

It catalyses the reaction UDP-alpha-D-glucose + 2 NAD(+) + H2O = UDP-alpha-D-glucuronate + 2 NADH + 3 H(+). It participates in nucleotide-sugar biosynthesis; UDP-alpha-D-glucuronate biosynthesis; UDP-alpha-D-glucuronate from UDP-alpha-D-glucose: step 1/1. Inhibited by UDP-xylose. Its function is as follows. Involved in the biosynthesis of UDP-glucuronic acid (UDP-GlcA), providing nucleotide sugars for cell-wall polymers. Required for the formation of cell wall ingrowths on the outer cell walls of nematode-induced syncytia. The sequence is that of UDP-glucose 6-dehydrogenase 3 (UGD3) from Arabidopsis thaliana (Mouse-ear cress).